We begin with the raw amino-acid sequence, 276 residues long: Casein kinase II subunit beta-3 (276 aa).

2 disordered regions span residues 1 to 22 (MYKERSGGGGGGSSRSEILGGA) and 34 to 86 (KKLE…SEGD).

It belongs to the casein kinase 2 subunit beta family. In terms of assembly, heterotetramer of two catalytic alpha subunits and two regulatory beta subunits. Interacts with CCA1. Interacts with LHY. Phosphorylated by alpha subunit.

The protein resides in the cytoplasm. Its subcellular location is the cytosol. It localises to the nucleus. Functionally, plays a complex role in regulating the basal catalytic activity of the alpha subunit. The tetrameric holoenzyme CK2, composed of two alpha and two beta subunits, phosphorylates the transcription factor PIF1 after an exposure to light, resulting in a proteasome-dependent degradation of PIF1 and promotion of photomorphogenesis. CK2 phosphorylates translation initiation factors. May participate in the regulation of the initiation of translation. Stimulates the binding of CCA1 to promoters. The protein is Casein kinase II subunit beta-3 (CKB3) of Arabidopsis thaliana (Mouse-ear cress).